The primary structure comprises 179 residues: ATP-dependent protease subunit HslV (179 aa).

Residue T5 is part of the active site. The Na(+) site is built by C164 and T167.

The protein belongs to the peptidase T1B family. HslV subfamily. A double ring-shaped homohexamer of HslV is capped on each side by a ring-shaped HslU homohexamer. The assembly of the HslU/HslV complex is dependent on binding of ATP.

Its subcellular location is the cytoplasm. It catalyses the reaction ATP-dependent cleavage of peptide bonds with broad specificity.. Allosterically activated by HslU binding. Functionally, protease subunit of a proteasome-like degradation complex believed to be a general protein degrading machinery. This chain is ATP-dependent protease subunit HslV, found in Carboxydothermus hydrogenoformans (strain ATCC BAA-161 / DSM 6008 / Z-2901).